Consider the following 162-residue polypeptide: G/U mismatch-specific DNA glycosylase (162 aa).

This sequence belongs to the uracil-DNA glycosylase (UDG) superfamily. TDG/mug family. Binds DNA as a monomer.

It is found in the cytoplasm. It catalyses the reaction Specifically hydrolyzes mismatched double-stranded DNA and polynucleotides, releasing free uracil.. Its function is as follows. Excises ethenocytosine and uracil, which can arise by alkylation or deamination of cytosine, respectively, from the corresponding mispairs with guanine in ds-DNA. It is capable of hydrolyzing the carbon-nitrogen bond between the sugar-phosphate backbone of the DNA and the mispaired base. The complementary strand guanine functions in substrate recognition. Required for DNA damage lesion repair in stationary-phase cells. In Serratia marcescens, this protein is G/U mismatch-specific DNA glycosylase.